The chain runs to 181 residues: uncharacterized protein (181 aa).

Residues 133–153 traverse the membrane as a helical segment; sequence MCVCVHVCACVYVCMCVLVCM.

It is found in the membrane. This is an uncharacterized protein from Homo sapiens (Human).